The primary structure comprises 231 residues: Somatolactin (231 aa).

The first 24 residues, 1-24 (MNMMTVKQQGVWAALLWPYLLTAS), serve as a signal peptide directing secretion. Cystine bridges form between C29–C39, C89–C205, and C222–C230. N145 carries N-linked (GlcNAc...) asparagine glycosylation.

The protein belongs to the somatotropin/prolactin family. As to expression, pituitary gland.

The protein resides in the secreted. The chain is Somatolactin from Paralichthys olivaceus (Bastard halibut).